The sequence spans 421 residues: Monopolin complex subunit mde4 (421 aa).

Disordered regions lie at residues 122-158 (QKSN…NKDE) and 224-316 (DRKL…MTVS). The segment covering 133–149 (VSQNRLRGSLDTVSSPS) has biased composition (polar residues). The span at 224 to 238 (DRKLRMQKKSTERKS) shows a compositional bias: basic and acidic residues. Over residues 262–287 (RQPNATSGSPLSVTPFLQKTSTSIGL) the composition is skewed to polar residues. A compositionally biased stretch (low complexity) spans 288 to 304 (SSSPPQSSPSAQSSQPF).

In terms of assembly, component of a monopolin-like complex composed of pcs1 and mde4. The complex associates with the kinetochore.

The protein localises to the nucleus. The protein resides in the chromosome. It is found in the centromere. Functionally, the monopolin-like pcs1/mde4 complex is essential for accurate chromosome segregation during mitosis and meiosis II. May clamp together microtubule binding sites on the same kinetochore, preventing merotelic attachment of microtubules. The polypeptide is Monopolin complex subunit mde4 (mde4) (Schizosaccharomyces pombe (strain 972 / ATCC 24843) (Fission yeast)).